The chain runs to 804 residues: Type 2 DNA topoisomerase 6 subunit B (804 aa).

ATP contacts are provided by residues N58, D89, 110-111 (SR), 120-127 (GQQGIGIS), and K629.

The protein belongs to the TOP6B family. In terms of assembly, homodimer. Heterotetramer of two Top6A and two Top6B chains.

It catalyses the reaction ATP-dependent breakage, passage and rejoining of double-stranded DNA.. Relaxes both positive and negative superturns and exhibits a strong decatenase activity. The protein is Type 2 DNA topoisomerase 6 subunit B of Halobacterium salinarum (strain ATCC 29341 / DSM 671 / R1).